The primary structure comprises 193 residues: CASP-like protein 2U1 (193 aa).

Topologically, residues 1–18 (MAMALALGGGQDAERKVK) are cytoplasmic. A helical transmembrane segment spans residues 19–39 (VAEVALRALLCGLGALAAALV). At 40–61 (ATDTQTRTFFSLQKKASYTDMK) the chain is on the extracellular side. A helical membrane pass occupies residues 62-82 (AMVFLVDAAAVAAGYSLLQLA). At 83 to 113 (ARCCGGGAMSSGRGDGGGRGRALSWCVFSCD) the chain is on the cytoplasmic side. The helical transmembrane segment at 114 to 134 (QALAYVLLAAVAAALQASVVA) threads the bilayer. At 135-156 (KRGQPELQWMGICALYGAFCRQ) the chain is on the extracellular side. A helical transmembrane segment spans residues 157-177 (AGAGLATAVVAGLAAVLLAFL). Over 178-193 (SAFNLFRLYGSGGTKS) the chain is Cytoplasmic.

The protein belongs to the Casparian strip membrane proteins (CASP) family. Homodimer and heterodimers.

It localises to the cell membrane. This chain is CASP-like protein 2U1, found in Sorghum bicolor (Sorghum).